The primary structure comprises 523 residues: Cytochrome P450 CYP82J17 (523 aa).

A helical transmembrane segment spans residues 4-24; it reads FLSQPITIVLAILSVLLYNIW. C462 is a binding site for heme.

Belongs to the cytochrome P450 family. As to expression, mainly expressed in leaves and seed pods and, to a lower extent, in flowers and stems.

The protein resides in the membrane. It participates in steroid metabolism; cholesterol metabolism. Functionally, involved in the biosynthesis of spiroketal steroid and saponin natural products from cholesterol such as diosgenin and analogs (e.g. furostanol and spirostanol), plant defense compounds used as main precursors for the industrial production of steroid hormones. During the 5,6-spiroketalization of cholesterol, may catalyze the 27-monohydroxylation of furostanol-type steroid to an intermediate product that undergoes a stereospecific formation of the terminal heterocycle to yield diosgenin. The chain is Cytochrome P450 CYP82J17 from Trigonella foenum-graecum (Fenugreek).